A 98-amino-acid polypeptide reads, in one-letter code: Large ribosomal subunit protein uL23 (98 aa).

Belongs to the universal ribosomal protein uL23 family. As to quaternary structure, part of the 50S ribosomal subunit. Contacts protein L29, and trigger factor when it is bound to the ribosome.

One of the early assembly proteins it binds 23S rRNA. One of the proteins that surrounds the polypeptide exit tunnel on the outside of the ribosome. Forms the main docking site for trigger factor binding to the ribosome. The polypeptide is Large ribosomal subunit protein uL23 (Clostridium beijerinckii (strain ATCC 51743 / NCIMB 8052) (Clostridium acetobutylicum)).